The chain runs to 184 residues: Peptide deformylase (184 aa).

The Fe cation site is built by C111 and H154. E155 is an active-site residue. H158 is a binding site for Fe cation.

Belongs to the polypeptide deformylase family. Fe(2+) is required as a cofactor.

The enzyme catalyses N-terminal N-formyl-L-methionyl-[peptide] + H2O = N-terminal L-methionyl-[peptide] + formate. Its function is as follows. Removes the formyl group from the N-terminal Met of newly synthesized proteins. Requires at least a dipeptide for an efficient rate of reaction. N-terminal L-methionine is a prerequisite for activity but the enzyme has broad specificity at other positions. In Pediococcus pentosaceus (strain ATCC 25745 / CCUG 21536 / LMG 10740 / 183-1w), this protein is Peptide deformylase.